Here is a 309-residue protein sequence, read N- to C-terminus: Taste receptor type 2 member 8 (309 aa).

Residues 1–7 (MFSPADN) lie on the Extracellular side of the membrane. A helical membrane pass occupies residues 8-28 (IFIILITGEFILGILGNGYIA). Residues 29–50 (LVNWIDWIKKKKISTIDYILTN) are Cytoplasmic-facing. Residues 51-71 (LVISRICLISVMVVNGIVIAV) traverse the membrane as a helical segment. Topologically, residues 72 to 82 (YPDVYTKSKLQ) are extracellular. The helical transmembrane segment at 83-103 (IAICTFWTFANYLNMWITTCL) threads the bilayer. At 104 to 131 (NVFYFLKIANSSHPLFLWLKQKIDMVVR) the chain is on the cytoplasmic side. A helical transmembrane segment spans residues 132-152 (WILLGCFAISLLVSLIAAIVL). Residues 153–184 (SYDYRFHAIAKHKRNITEMFHVSKRPYFEPLT) are Extracellular-facing. An N-linked (GlcNAc...) asparagine glycan is attached at asparagine 167. A helical membrane pass occupies residues 185–205 (LFNLFAIVPFIVSLISFFLLV). Residues 206–239 (RSLWRHTKQIKLYATGGRDPSTEVHVRAIKTMTS) lie on the Cytoplasmic side of the membrane. Residues 240–260 (FIFLFFLYYISSILVTFSYLM) form a helical membrane-spanning segment. At 261 to 266 (TKYKLA) the chain is on the extracellular side. A helical membrane pass occupies residues 267 to 287 (VEFGEIVAILYPLGHSLILIV). At 288–309 (LNNKLRQTFVRMLTCRKIACVI) the chain is on the cytoplasmic side.

This sequence belongs to the G-protein coupled receptor T2R family.

The protein localises to the membrane. Its function is as follows. Receptor that may play a role in the perception of bitterness and is gustducin-linked. May play a role in sensing the chemical composition of the gastrointestinal content. The activity of this receptor may stimulate alpha gustducin, mediate PLC-beta-2 activation and lead to the gating of TRPM5. The sequence is that of Taste receptor type 2 member 8 (TAS2R8) from Gorilla gorilla gorilla (Western lowland gorilla).